Here is a 134-residue protein sequence, read N- to C-terminus: Small ribosomal subunit protein uS9 (134 aa).

A disordered region spans residues 109–134 (DARRTEPHKPSKSTKGPRAKRQKSYR). Positions 118–134 (PSKSTKGPRAKRQKSYR) are enriched in basic residues.

This sequence belongs to the universal ribosomal protein uS9 family.

The protein is Small ribosomal subunit protein uS9 of Methanococcus aeolicus (strain ATCC BAA-1280 / DSM 17508 / OCM 812 / Nankai-3).